The following is a 335-amino-acid chain: Biotin synthase (335 aa).

A Radical SAM core domain is found at 53-276 (VEIEGIVSVK…RTILRFAGGR (224 aa)). Residues C66, C70, and C73 each coordinate [4Fe-4S] cluster. C109, C142, C201, and R271 together coordinate [2Fe-2S] cluster.

It belongs to the radical SAM superfamily. Biotin synthase family. In terms of assembly, homodimer. [4Fe-4S] cluster serves as cofactor. It depends on [2Fe-2S] cluster as a cofactor.

The catalysed reaction is (4R,5S)-dethiobiotin + (sulfur carrier)-SH + 2 reduced [2Fe-2S]-[ferredoxin] + 2 S-adenosyl-L-methionine = (sulfur carrier)-H + biotin + 2 5'-deoxyadenosine + 2 L-methionine + 2 oxidized [2Fe-2S]-[ferredoxin]. The protein operates within cofactor biosynthesis; biotin biosynthesis; biotin from 7,8-diaminononanoate: step 2/2. Catalyzes the conversion of dethiobiotin (DTB) to biotin by the insertion of a sulfur atom into dethiobiotin via a radical-based mechanism. This is Biotin synthase from Acidothermus cellulolyticus (strain ATCC 43068 / DSM 8971 / 11B).